Consider the following 528-residue polypeptide: Apolipoprotein N-acyltransferase (528 aa).

5 consecutive transmembrane segments (helical) span residues 8–28 (IMLL…AVGA), 69–89 (AFWI…WWLG), 99–119 (FAWA…VFYG), 178–198 (VLGL…PALL), and 203–223 (GAKL…GYGA). A CN hydrolase domain is found at 241–490 (VQPNIDQAAK…EGVENATFTL (250 aa)). Residue E285 is the Proton acceptor of the active site. The active site involves K349. C402 functions as the Nucleophile in the catalytic mechanism.

The protein belongs to the CN hydrolase family. Apolipoprotein N-acyltransferase subfamily.

It localises to the cell inner membrane. The catalysed reaction is N-terminal S-1,2-diacyl-sn-glyceryl-L-cysteinyl-[lipoprotein] + a glycerophospholipid = N-acyl-S-1,2-diacyl-sn-glyceryl-L-cysteinyl-[lipoprotein] + a 2-acyl-sn-glycero-3-phospholipid + H(+). The protein operates within protein modification; lipoprotein biosynthesis (N-acyl transfer). Its function is as follows. Catalyzes the phospholipid dependent N-acylation of the N-terminal cysteine of apolipoprotein, the last step in lipoprotein maturation. This is Apolipoprotein N-acyltransferase from Allorhizobium ampelinum (strain ATCC BAA-846 / DSM 112012 / S4) (Agrobacterium vitis (strain S4)).